Here is a 437-residue protein sequence, read N- to C-terminus: Na(+)/H(+) antiporter NhaA (437 aa).

Helical transmembrane passes span 12–32 (SMNI…AVIA), 65–85 (LTMI…MVGL), 103–123 (ALPF…YSMV), 133–153 (GLAI…SLLG), 162–182 (IFLT…IAIF), 186–206 (HVAY…YFIG), 214–234 (IFFL…GIHS), 308–328 (GAVN…VMFS), 333–353 (VIGG…FLGI), 377–397 (ISGV…IANL), and 412–432 (LGVL…LHWV).

It belongs to the NhaA Na(+)/H(+) (TC 2.A.33) antiporter family.

The protein localises to the cell inner membrane. The enzyme catalyses Na(+)(in) + 2 H(+)(out) = Na(+)(out) + 2 H(+)(in). Na(+)/H(+) antiporter that extrudes sodium in exchange for external protons. The polypeptide is Na(+)/H(+) antiporter NhaA (Bacteroides fragilis (strain YCH46)).